The primary structure comprises 331 residues: Pyrimidine monooxygenase RutA (331 aa).

FMN-binding positions include 79–80 (IK), N145, E154, 170–171 (RY), and S220. A disordered region spans residues 300 to 331 (WLTEQSQKDTRSGTDTNVRQMADPTSASAFNH). Over residues 312–331 (GTDTNVRQMADPTSASAFNH) the composition is skewed to polar residues.

This sequence belongs to the NtaA/SnaA/DszA monooxygenase family. RutA subfamily.

It carries out the reaction uracil + FMNH2 + NADH + O2 = (Z)-3-ureidoacrylate + FMN + NAD(+) + H2O + H(+). The enzyme catalyses thymine + FMNH2 + NADH + O2 = (Z)-2-methylureidoacrylate + FMN + NAD(+) + H2O + H(+). In terms of biological role, catalyzes the pyrimidine ring opening between N-3 and C-4 by an unusual flavin hydroperoxide-catalyzed mechanism, adding oxygen atoms in the process to yield ureidoacrylate peracid, that immediately reacts with FMN forming ureidoacrylate and FMN-N(5)-oxide. The FMN-N(5)-oxide reacts spontaneously with NADH to produce FMN. Requires the flavin reductase RutF to regenerate FMN in vivo. The protein is Pyrimidine monooxygenase RutA of Escherichia coli O7:K1 (strain IAI39 / ExPEC).